Consider the following 559-residue polypeptide: Urocanate hydratase (559 aa).

NAD(+) is bound by residues 53–54, glutamine 131, 177–179, glutamate 197, arginine 202, 243–244, 264–268, 274–275, and tyrosine 323; these read GG, GMG, NA, QTSAH, and YL. Residue cysteine 411 is part of the active site. NAD(+) is bound at residue glycine 493.

It belongs to the urocanase family. NAD(+) serves as cofactor.

It localises to the cytoplasm. The catalysed reaction is 4-imidazolone-5-propanoate = trans-urocanate + H2O. The protein operates within amino-acid degradation; L-histidine degradation into L-glutamate; N-formimidoyl-L-glutamate from L-histidine: step 2/3. Functionally, catalyzes the conversion of urocanate to 4-imidazolone-5-propionate. This chain is Urocanate hydratase, found in Pseudomonas aeruginosa (strain LESB58).